Here is a 203-residue protein sequence, read N- to C-terminus: MGALKYVEEIQKKKQSDVIRFLLRVRCWELRQLNAIHRASRPSRPDKARRLGYKAKQGYVVYRIRVRRGGRKRPAPKGATYGKPTNMGINQLKYQRALRATAEERVGRRCANLRVLNSYWINQDSTYKYFEVILVDPQHKAIRRDARINWICNAVHKHREARGLTATGKKSRGINKGHRYNNTRSGRRHTWKRQNTQSYWRYR.

The tract at residues A166 to R203 is disordered. Residues K169–K192 show a composition bias toward basic residues. Positions R193–R203 are enriched in polar residues.

Belongs to the eukaryotic ribosomal protein eL15 family.

This Aspergillus niger protein is Large ribosomal subunit protein eL15 (rpl15).